A 102-amino-acid chain; its full sequence is Protein translation factor SUI1 homolog (102 aa).

Belongs to the SUI1 family.

The chain is Protein translation factor SUI1 homolog from Methanosarcina acetivorans (strain ATCC 35395 / DSM 2834 / JCM 12185 / C2A).